The chain runs to 286 residues: Putative chaperone BssE (286 aa).

ATP-binding positions include 47–54 (GKQGCGKS) and 108–115 (GCVIHLEE).

This sequence belongs to the CbbQ/NirQ/NorQ/GpvN family.

Functionally, may have a role in assembly and/or activation of benzylsuccinate synthase. This chain is Putative chaperone BssE (bssE), found in Thauera aromatica.